A 102-amino-acid chain; its full sequence is Biotrophy-associated secreted protein 2 (102 aa).

The signal sequence occupies residues 1 to 19 (MVRVSTFAAILAMALSVTA). Residue Asn46 is glycosylated (N-linked (GlcNAc...) asparagine).

The protein resides in the secreted. Its function is as follows. Secreted effector involved in biotrophic colonization of plant cells. This Pyricularia oryzae (strain 70-15 / ATCC MYA-4617 / FGSC 8958) (Rice blast fungus) protein is Biotrophy-associated secreted protein 2.